Consider the following 495-residue polypeptide: Putative lon protease homolog (495 aa).

52-59 (GPPGVGKS) lines the ATP pocket. The disordered stretch occupies residues 471 to 495 (YSSETTGSQRDSTYNYANMDDRSYE). A compositionally biased stretch (polar residues) spans 472–486 (SSETTGSQRDSTYNY).

It belongs to the peptidase S16 family.

The sequence is that of Putative lon protease homolog from Thermoplasma volcanium (strain ATCC 51530 / DSM 4299 / JCM 9571 / NBRC 15438 / GSS1).